A 300-amino-acid polypeptide reads, in one-letter code: 1D-myo-inositol 2-acetamido-2-deoxy-alpha-D-glucopyranoside deacetylase (300 aa).

Residues His13, Asp16, and His147 each coordinate Zn(2+).

The protein belongs to the MshB deacetylase family. Requires Zn(2+) as cofactor.

The catalysed reaction is 1D-myo-inositol 2-acetamido-2-deoxy-alpha-D-glucopyranoside + H2O = 1D-myo-inositol 2-amino-2-deoxy-alpha-D-glucopyranoside + acetate. Its function is as follows. Catalyzes the deacetylation of 1D-myo-inositol 2-acetamido-2-deoxy-alpha-D-glucopyranoside (GlcNAc-Ins) in the mycothiol biosynthesis pathway. This chain is 1D-myo-inositol 2-acetamido-2-deoxy-alpha-D-glucopyranoside deacetylase, found in Mycolicibacterium paratuberculosis (strain ATCC BAA-968 / K-10) (Mycobacterium paratuberculosis).